We begin with the raw amino-acid sequence, 104 residues long: BLOC-1-related complex subunit 7 (104 aa).

This sequence belongs to the BORCS7 family.

It localises to the lysosome membrane. In terms of biological role, as part of a BORC-like complex may play a role in lysosomes movement and localization at the cell periphery. Associated with the cytosolic face of lysosomes, this complex may couple lysosomes to microtubule plus-end-directed kinesin motor. This is BLOC-1-related complex subunit 7 from Xenopus tropicalis (Western clawed frog).